The primary structure comprises 226 residues: Probable chemoreceptor glutamine deamidase CheD (226 aa).

The protein belongs to the CheD family.

The catalysed reaction is L-glutaminyl-[protein] + H2O = L-glutamyl-[protein] + NH4(+). Functionally, probably deamidates glutamine residues to glutamate on methyl-accepting chemotaxis receptors (MCPs), playing an important role in chemotaxis. This chain is Probable chemoreceptor glutamine deamidase CheD, found in Bordetella avium (strain 197N).